The sequence spans 652 residues: Acetyl-coenzyme A synthetase (652 aa).

CoA contacts are provided by residues 189–192 (RGGK) and T311. Residues 387 to 389 (GEP), 411 to 416 (DTWWQT), D500, and R515 contribute to the ATP site. CoA is bound at residue S523. ATP is bound at residue R526. V537, H539, and V542 together coordinate Mg(2+). R584 lines the CoA pocket. K609 bears the N6-acetyllysine mark.

It belongs to the ATP-dependent AMP-binding enzyme family. Requires Mg(2+) as cofactor. In terms of processing, acetylated. Deacetylation by the SIR2-homolog deacetylase activates the enzyme.

It catalyses the reaction acetate + ATP + CoA = acetyl-CoA + AMP + diphosphate. In terms of biological role, catalyzes the conversion of acetate into acetyl-CoA (AcCoA), an essential intermediate at the junction of anabolic and catabolic pathways. AcsA undergoes a two-step reaction. In the first half reaction, AcsA combines acetate with ATP to form acetyl-adenylate (AcAMP) intermediate. In the second half reaction, it can then transfer the acetyl group from AcAMP to the sulfhydryl group of CoA, forming the product AcCoA. The polypeptide is Acetyl-coenzyme A synthetase (Rhizobium rhizogenes (Agrobacterium rhizogenes)).